We begin with the raw amino-acid sequence, 239 residues long: MNIEQFTAALEEKGITLSPVQLEQFETYFRMLVEWNEKMNLTSITEKEEVYLKHFYDSISASFFIDFHKVTTICDIGAGAGFPSIPLKICFPHLHVTIVDSLQKRITFLNELAKGLNLQDTTFYHDRAETFGQRKEKRESYDLVTARAVARLSVLSELCLPLVKKEGLFVALKASAADEEMQAGKKAVTVLGGEVVEKHSFVLPLEESERNIIVIEKKKQTPKKYPRKPGTPNKSPIEG.

S-adenosyl-L-methionine contacts are provided by residues Gly-77, Phe-82, 128 to 129, and Arg-147; that span reads AE. Residues 216-239 form a disordered region; that stretch reads EKKKQTPKKYPRKPGTPNKSPIEG.

Belongs to the methyltransferase superfamily. RNA methyltransferase RsmG family.

It localises to the cytoplasm. Functionally, specifically methylates the N7 position of guanine in position 535 of 16S rRNA. This Bacillus pumilus (strain SAFR-032) protein is Ribosomal RNA small subunit methyltransferase G.